A 308-amino-acid chain; its full sequence is Membrane protein insertase YidC 1 (308 aa).

An N-terminal signal peptide occupies residues 1-22; that stretch reads MKSIKRFALSAMGVAMLLVLTG. Cys-23 carries N-palmitoyl cysteine lipidation. A lipid anchor (S-diacylglycerol cysteine) is attached at Cys-23. The next 5 helical transmembrane spans lie at 60–80, 135–155, 168–188, 211–226, and 232–252; these read FGVA…PLGI, FGGV…AIYF, YLGI…GVLY, MIYM…SLFS, and LYWV…NYIV. The tract at residues 263–308 is disordered; the sequence is ELAKNPPKASAFSKPSGRKDVTPEQPTAITSKKKHKNRNAGKQRSR. Over residues 293–308 the composition is skewed to basic residues; the sequence is SKKKHKNRNAGKQRSR.

The protein belongs to the OXA1/ALB3/YidC family. Type 2 subfamily.

Its subcellular location is the cell membrane. Functionally, required for the insertion and/or proper folding and/or complex formation of integral membrane proteins into the membrane. Involved in integration of membrane proteins that insert both dependently and independently of the Sec translocase complex, as well as at least some lipoproteins. The sequence is that of Membrane protein insertase YidC 1 from Streptococcus pneumoniae serotype 4 (strain ATCC BAA-334 / TIGR4).